Consider the following 81-residue polypeptide: Photosystem I iron-sulfur center (81 aa).

4Fe-4S ferredoxin-type domains lie at S2 to W31 and I39 to Y68. Positions 11, 14, 17, 21, 48, 51, 54, and 58 each coordinate [4Fe-4S] cluster.

The eukaryotic PSI reaction center is composed of at least 11 subunits. Requires [4Fe-4S] cluster as cofactor.

Its subcellular location is the plastid. The protein resides in the chloroplast thylakoid membrane. The catalysed reaction is reduced [plastocyanin] + hnu + oxidized [2Fe-2S]-[ferredoxin] = oxidized [plastocyanin] + reduced [2Fe-2S]-[ferredoxin]. Functionally, apoprotein for the two 4Fe-4S centers FA and FB of photosystem I (PSI); essential for photochemical activity. FB is the terminal electron acceptor of PSI, donating electrons to ferredoxin. The C-terminus interacts with PsaA/B/D and helps assemble the protein into the PSI complex. Required for binding of PsaD and PsaE to PSI. PSI is a plastocyanin/cytochrome c6-ferredoxin oxidoreductase, converting photonic excitation into a charge separation, which transfers an electron from the donor P700 chlorophyll pair to the spectroscopically characterized acceptors A0, A1, FX, FA and FB in turn. In Nephroselmis olivacea (Green alga), this protein is Photosystem I iron-sulfur center.